Reading from the N-terminus, the 299-residue chain is Sodium/potassium-transporting ATPase subunit beta-2 (299 aa).

The Cytoplasmic segment spans residues 1–36; it reads MAALTQKKTCSQMMEEWKEFMWNPRTREFMGRTGSS. Residues 37–57 form a helical; Signal-anchor for type II membrane protein membrane-spanning segment; it reads WALILLFYVVFYAFLTAVFSL. The Extracellular segment spans residues 58 to 299; it reads SLWVMLQTID…VIFTMKIDRL (242 aa). 2 N-linked (GlcNAc...) asparagine glycosylation sites follow: Asn-101 and Asn-119. 2 disulfides stabilise this stretch: Cys-130–Cys-152 and Cys-162–Cys-178. 4 N-linked (GlcNAc...) asparagine glycosylation sites follow: Asn-199, Asn-226, Asn-247, and Asn-259. A disulfide bridge links Cys-206 with Cys-270.

It belongs to the X(+)/potassium ATPases subunit beta family. The sodium/potassium-transporting ATPase is composed of a catalytic alpha subunit, an auxiliary non-catalytic beta subunit and an additional regulatory subunit. As to expression, expressed at a high level in bladder epithelial cells and eye and at a trace level in kidney; it is not detectable in significant amounts in the stomach, colon and small intestine.

The protein localises to the cell membrane. In terms of biological role, this is the non-catalytic component of the active enzyme, which catalyzes the hydrolysis of ATP coupled with the exchange of Na(+) and K(+) ions across the plasma membrane. The exact function of this glycoprotein is not known. Some specific sequence of the beta subunit can modulate the activation of the Na,K-pump by extracellular potassium ions. The polypeptide is Sodium/potassium-transporting ATPase subunit beta-2 (Rhinella marina (Cane toad)).